A 351-amino-acid chain; its full sequence is UDP-N-acetylglucosamine--N-acetylmuramyl-(pentapeptide) pyrophosphoryl-undecaprenol N-acetylglucosamine transferase (351 aa).

UDP-N-acetyl-alpha-D-glucosamine-binding positions include 12-14 (TGG), asparagine 124, arginine 160, serine 188, isoleucine 239, 258-263 (ALTVCE), and glutamine 283.

Belongs to the glycosyltransferase 28 family. MurG subfamily.

It is found in the cell inner membrane. The catalysed reaction is di-trans,octa-cis-undecaprenyl diphospho-N-acetyl-alpha-D-muramoyl-L-alanyl-D-glutamyl-meso-2,6-diaminopimeloyl-D-alanyl-D-alanine + UDP-N-acetyl-alpha-D-glucosamine = di-trans,octa-cis-undecaprenyl diphospho-[N-acetyl-alpha-D-glucosaminyl-(1-&gt;4)]-N-acetyl-alpha-D-muramoyl-L-alanyl-D-glutamyl-meso-2,6-diaminopimeloyl-D-alanyl-D-alanine + UDP + H(+). The protein operates within cell wall biogenesis; peptidoglycan biosynthesis. Cell wall formation. Catalyzes the transfer of a GlcNAc subunit on undecaprenyl-pyrophosphoryl-MurNAc-pentapeptide (lipid intermediate I) to form undecaprenyl-pyrophosphoryl-MurNAc-(pentapeptide)GlcNAc (lipid intermediate II). The protein is UDP-N-acetylglucosamine--N-acetylmuramyl-(pentapeptide) pyrophosphoryl-undecaprenol N-acetylglucosamine transferase of Glaesserella parasuis serovar 5 (strain SH0165) (Haemophilus parasuis).